The sequence spans 370 residues: 4-hydroxy-3-methylbut-2-en-1-yl diphosphate synthase (flavodoxin) (370 aa).

C268, C271, C303, and E310 together coordinate [4Fe-4S] cluster.

Belongs to the IspG family. The cofactor is [4Fe-4S] cluster.

It carries out the reaction (2E)-4-hydroxy-3-methylbut-2-enyl diphosphate + oxidized [flavodoxin] + H2O + 2 H(+) = 2-C-methyl-D-erythritol 2,4-cyclic diphosphate + reduced [flavodoxin]. The protein operates within isoprenoid biosynthesis; isopentenyl diphosphate biosynthesis via DXP pathway; isopentenyl diphosphate from 1-deoxy-D-xylulose 5-phosphate: step 5/6. Its function is as follows. Converts 2C-methyl-D-erythritol 2,4-cyclodiphosphate (ME-2,4cPP) into 1-hydroxy-2-methyl-2-(E)-butenyl 4-diphosphate. The sequence is that of 4-hydroxy-3-methylbut-2-en-1-yl diphosphate synthase (flavodoxin) from Bacillus pumilus (strain SAFR-032).